A 102-amino-acid chain; its full sequence is RNA-binding protein Hfq (102 aa).

A Sm domain is found at 9–68 (DPFLNALRRERVPVSIYLVNGIKLQGQIESFDQFVILLKNTVSQMVYKHAISTVVPSRPV). The tract at residues 63 to 102 (VPSRPVSHHSNNAGGGTSSNYHHGSSPQNTSAQQDSEETE) is disordered. Polar residues predominate over residues 70 to 96 (HHSNNAGGGTSSNYHHGSSPQNTSAQQ).

Belongs to the Hfq family. In terms of assembly, homohexamer.

Functionally, RNA chaperone that binds small regulatory RNA (sRNAs) and mRNAs to facilitate mRNA translational regulation in response to envelope stress, environmental stress and changes in metabolite concentrations. Also binds with high specificity to tRNAs. This chain is RNA-binding protein Hfq, found in Shigella dysenteriae serotype 1 (strain Sd197).